The chain runs to 207 residues: Transcriptional regulatory protein RcsA (207 aa).

The 66-residue stretch at 131–196 (LTLPTLSLSK…VIYHIVRLTE (66 aa)) folds into the HTH luxR-type domain. Positions 155 to 174 (TSQISTQMNIKAKTVSSHKG) form a DNA-binding region, H-T-H motif.

It belongs to the RcsA family.

Component of the Rcs signaling system, which controls transcription of numerous genes. Binds to DNA to regulate expression of genes. This Klebsiella aerogenes (Enterobacter aerogenes) protein is Transcriptional regulatory protein RcsA.